Consider the following 249-residue polypeptide: Deoxyribose-phosphate aldolase (249 aa).

The active-site Proton donor/acceptor is the aspartate 94. The active-site Schiff-base intermediate with acetaldehyde is lysine 158. Lysine 200 functions as the Proton donor/acceptor in the catalytic mechanism.

It belongs to the DeoC/FbaB aldolase family. DeoC type 1 subfamily.

It localises to the cytoplasm. It catalyses the reaction 2-deoxy-D-ribose 5-phosphate = D-glyceraldehyde 3-phosphate + acetaldehyde. Its pathway is carbohydrate degradation; 2-deoxy-D-ribose 1-phosphate degradation; D-glyceraldehyde 3-phosphate and acetaldehyde from 2-deoxy-alpha-D-ribose 1-phosphate: step 2/2. In terms of biological role, catalyzes a reversible aldol reaction between acetaldehyde and D-glyceraldehyde 3-phosphate to generate 2-deoxy-D-ribose 5-phosphate. The polypeptide is Deoxyribose-phosphate aldolase (Thermoplasma volcanium (strain ATCC 51530 / DSM 4299 / JCM 9571 / NBRC 15438 / GSS1)).